The primary structure comprises 358 residues: Photosystem II protein D1 3 (358 aa).

3 consecutive transmembrane segments (helical) span residues 28–45 (YIGW…AATT), 117–132 (HFLI…QWEL), and 141–155 (WICV…AAMA). Histidine 117 is a binding site for chlorophyll a. Tyrosine 125 lines the pheophytin a pocket. Residues aspartate 169 and glutamate 188 each contribute to the [CaMn4O5] cluster site. Residues 196 to 217 (FHMLGVAGVFGGSLFSAMHGSL) traverse the membrane as a helical segment. Histidine 197 is a binding site for chlorophyll a. Residues histidine 214 and 263–264 (SF) each bind a quinone. Histidine 214 is a Fe cation binding site. Position 271 (histidine 271) interacts with Fe cation. The chain crosses the membrane as a helical span at residues 273–287 (LLGAWPVVGIWFTSM). Residues histidine 331, glutamate 332, aspartate 341, and alanine 343 each coordinate [CaMn4O5] cluster. A propeptide spanning residues 344-358 (TVESTPVALQAPAIG) is cleaved from the precursor.

Belongs to the reaction center PufL/M/PsbA/D family. As to quaternary structure, PSII is composed of 1 copy each of membrane proteins PsbA, PsbB, PsbC, PsbD, PsbE, PsbF, PsbH, PsbI, PsbJ, PsbK, PsbL, PsbM, PsbT, PsbX, PsbY, PsbZ, Psb30/Ycf12, peripheral proteins PsbO, CyanoQ (PsbQ), PsbU, PsbV and a large number of cofactors. It forms dimeric complexes. The D1/D2 heterodimer binds P680, chlorophylls that are the primary electron donor of PSII, and subsequent electron acceptors. It shares a non-heme iron and each subunit binds pheophytin, quinone, additional chlorophylls, carotenoids and lipids. D1 provides most of the ligands for the Mn4-Ca-O5 cluster of the oxygen-evolving complex (OEC). There is also a Cl(-1) ion associated with D1 and D2, which is required for oxygen evolution. The PSII complex binds additional chlorophylls, carotenoids and specific lipids. is required as a cofactor. Tyr-160 forms a radical intermediate that is referred to as redox-active TyrZ, YZ or Y-Z. Post-translationally, C-terminally processed by CtpA; processing is essential to allow assembly of the oxygen-evolving complex and thus photosynthetic growth.

Its subcellular location is the cellular thylakoid membrane. The catalysed reaction is 2 a plastoquinone + 4 hnu + 2 H2O = 2 a plastoquinol + O2. Functionally, photosystem II (PSII) is a light-driven water:plastoquinone oxidoreductase that uses light energy to abstract electrons from H(2)O, generating O(2) and a proton gradient subsequently used for ATP formation. It consists of a core antenna complex that captures photons, and an electron transfer chain that converts photonic excitation into a charge separation. The D1/D2 (PsbA/PsbD) reaction center heterodimer binds P680, the primary electron donor of PSII as well as several subsequent electron acceptors. The chain is Photosystem II protein D1 3 from Synechococcus sp. (strain CC9311).